The following is a 401-amino-acid chain: Chaperone protein DnaJ (401 aa).

Residues 4–69 (DYYEVLGVSR…DKRRRYDQFG (66 aa)) form the J domain. The CR-type zinc-finger motif lies at 156 to 237 (GVEKTLKIKK…CYGEGIKQGD (82 aa)). The Zn(2+) site is built by Cys169, Cys172, Cys185, Cys188, Cys211, Cys214, Cys225, and Cys228. CXXCXGXG motif repeat units lie at residues 169 to 176 (CKECNGSG), 185 to 192 (CQTCHGSG), 211 to 218 (CPTCGGEG), and 225 to 232 (CTACYGEG). The interval 377-401 (AFSPSGSNNDKEEKSFFEKARDIFS) is disordered. Positions 385 to 401 (NDKEEKSFFEKARDIFS) are enriched in basic and acidic residues.

It belongs to the DnaJ family. As to quaternary structure, homodimer. The cofactor is Zn(2+).

Its subcellular location is the cytoplasm. Functionally, participates actively in the response to hyperosmotic and heat shock by preventing the aggregation of stress-denatured proteins and by disaggregating proteins, also in an autonomous, DnaK-independent fashion. Unfolded proteins bind initially to DnaJ; upon interaction with the DnaJ-bound protein, DnaK hydrolyzes its bound ATP, resulting in the formation of a stable complex. GrpE releases ADP from DnaK; ATP binding to DnaK triggers the release of the substrate protein, thus completing the reaction cycle. Several rounds of ATP-dependent interactions between DnaJ, DnaK and GrpE are required for fully efficient folding. Also involved, together with DnaK and GrpE, in the DNA replication of plasmids through activation of initiation proteins. The sequence is that of Chaperone protein DnaJ from Chlorobium limicola (strain DSM 245 / NBRC 103803 / 6330).